The primary structure comprises 621 residues: Leucine aminopeptidase (621 aa).

The propeptide occupies 1-73; the sequence is MPLLRSSQHI…ISNRKEFRKM (73 aa). The tract at residues 129-152 is disordered; it reads SSSGGSGGNGGSAGSSGNGEGGAQ. The segment covering 132-150 has biased composition (gly residues); it reads GGSGGNGGSAGSSGNGEGG. A peptide is bound by residues K390, D395, and K402. Residues K390 and D395 each coordinate Zn(2+). Residues 400 to 417 form an L13 loop region; it reads NLKAAPGSMIDLMKFDMS. Residue K402 is part of the active site. Residues D410, M412, D415, D475, and E477 each contribute to the Zn(2+) site. 2 residues coordinate a peptide: D415 and D475. R479 is a catalytic residue.

The protein belongs to the peptidase M17 family. In terms of assembly, homohexamer composed of dimer of trimers. Both the identity and concentration of metal ions available dictate the extent to which oligomerization occurs; Mn(2+) and Co(2+) induces oligomerization, whereas Mg(2+) has no effect, and Zn(2+) causes irreversible protein aggregation in vitro. Zn(2+) is required as a cofactor.

It is found in the cytoplasm. It catalyses the reaction Release of an N-terminal amino acid, Xaa-|-Yaa-, in which Xaa is preferably Leu, but may be other amino acids including Pro although not Arg or Lys, and Yaa may be Pro. Amino acid amides and methyl esters are also readily hydrolyzed, but rates on arylamides are exceedingly low.. It carries out the reaction L-cysteinylglycine + H2O = L-cysteine + glycine. Oligomerization is required for catalytic activity and is metal-dependent. The type of metal that binds the 2 metal binding sites influences catalytic activity and substrate specificity. In vitro, activated by Co(2+), Mn(2+), Ni(2+), Mg(2+) and Zn(2+) with decreasing strength. Occupancy of the site 2 is essential and sufficient for activating the enzyme but occupation of the 2 sites is necessary for full catalytic activity. Inhibited by Ca(2+). Inhibited by fungal metabolite bestatin. In terms of biological role, aminopeptidase which preferentially cleaves leucine residues from the N-terminus of peptides. Also, has some activity towards tryptophan and methionine and has very low activity towards alanine, arginine, asparagine, phenylalanine and tyrosine. No activity towards histidine, serine, valine, isoleucine, glycine, aspartic acid and glutamic acid. In addition, cleaves the Cys-Gly dipeptide, probably as part of the glutathione regulation pathway; cleavage only occurs in the presence of Mn(2+). Plays a role in the final step of host hemoglobin catabolism, by cleaving hemoglobin-derived oligopeptides providing a source of amino acids for the parasite protein synthesis and for the maintenance of osmotic homeostasis. The polypeptide is Leucine aminopeptidase (Plasmodium vivax (strain Salvador I)).